The primary structure comprises 622 residues: UvrABC system protein C (622 aa).

Positions 13–92 (DKPGVYLMKN…IKKYRPRYNI (80 aa)) constitute a GIY-YIG domain. Residues 204-239 (KDIIRKLKEDMDTLSENMEFEKAAELRDKIFALEKI) form the UVR domain.

Belongs to the UvrC family. As to quaternary structure, interacts with UvrB in an incision complex.

It is found in the cytoplasm. In terms of biological role, the UvrABC repair system catalyzes the recognition and processing of DNA lesions. UvrC both incises the 5' and 3' sides of the lesion. The N-terminal half is responsible for the 3' incision and the C-terminal half is responsible for the 5' incision. This chain is UvrABC system protein C, found in Clostridium kluyveri (strain ATCC 8527 / DSM 555 / NBRC 12016 / NCIMB 10680 / K1).